Consider the following 179-residue polypeptide: Large ribosomal subunit protein uL10 (179 aa).

It belongs to the universal ribosomal protein uL10 family. As to quaternary structure, part of the ribosomal stalk of the 50S ribosomal subunit. The N-terminus interacts with L11 and the large rRNA to form the base of the stalk. The C-terminus forms an elongated spine to which L12 dimers bind in a sequential fashion forming a multimeric L10(L12)X complex.

In terms of biological role, forms part of the ribosomal stalk, playing a central role in the interaction of the ribosome with GTP-bound translation factors. The protein is Large ribosomal subunit protein uL10 of Mycolicibacterium vanbaalenii (strain DSM 7251 / JCM 13017 / BCRC 16820 / KCTC 9966 / NRRL B-24157 / PYR-1) (Mycobacterium vanbaalenii).